The sequence spans 218 residues: GTP cyclohydrolase 1 (218 aa).

Zn(2+) contacts are provided by cysteine 107, histidine 110, and cysteine 178.

The protein belongs to the GTP cyclohydrolase I family. As to quaternary structure, homomer.

The catalysed reaction is GTP + H2O = 7,8-dihydroneopterin 3'-triphosphate + formate + H(+). It functions in the pathway cofactor biosynthesis; 7,8-dihydroneopterin triphosphate biosynthesis; 7,8-dihydroneopterin triphosphate from GTP: step 1/1. In Azorhizobium caulinodans (strain ATCC 43989 / DSM 5975 / JCM 20966 / LMG 6465 / NBRC 14845 / NCIMB 13405 / ORS 571), this protein is GTP cyclohydrolase 1.